Here is a 409-residue protein sequence, read N- to C-terminus: Tyrosine--tRNA ligase (409 aa).

The short motif at 54–63 (PTAPDIHLGH) is the 'HIGH' region element. Residues 238 to 242 (KMSKS) carry the 'KMSKS' region motif. Lysine 241 provides a ligand contact to ATP. The S4 RNA-binding domain occupies 347–407 (QGILRILREA…GKRKFARVKL (61 aa)).

The protein belongs to the class-I aminoacyl-tRNA synthetase family. TyrS type 2 subfamily. Homodimer.

It is found in the cytoplasm. It carries out the reaction tRNA(Tyr) + L-tyrosine + ATP = L-tyrosyl-tRNA(Tyr) + AMP + diphosphate + H(+). Functionally, catalyzes the attachment of tyrosine to tRNA(Tyr) in a two-step reaction: tyrosine is first activated by ATP to form Tyr-AMP and then transferred to the acceptor end of tRNA(Tyr). This chain is Tyrosine--tRNA ligase, found in Bordetella parapertussis (strain 12822 / ATCC BAA-587 / NCTC 13253).